Consider the following 462-residue polypeptide: Nuclear distribution protein PAC1 (462 aa).

Positions 9–41 constitute a LisH domain; the sequence is QAEELHKAIIAYLGVINAPKTAAAFREEVNFSA. Positions 60-87 form a coiled coil; it reads TSVVRLQKKVLELEQRNQSLQSELDSTT. Residues 78–99 are compositionally biased toward polar residues; sequence SLQSELDSTTPTSLLRRNQDPS. The segment at 78–103 is disordered; that stretch reads SLQSELDSTTPTSLLRRNQDPSSWLP. WD repeat units lie at residues 113-154, 156-196, 200-247, 250-289, 292-352, 354-393, 398-445, and 447-462; these read SHRS…RTVK, HTKG…KNIR, GHDH…CVKT, GHAD…AKCT, GHEH…IKTL, GHDN…RCVK, AHSH…AGIR, and VIAT…IFAS. Residues 414-434 are disordered; the sequence is KDAPTNGDAPNGTTANGASKK.

This sequence belongs to the WD repeat LIS1/nudF family. Self-associates. Interacts with NDL1 and dynein.

It is found in the cytoplasm. The protein resides in the cytoskeleton. It localises to the spindle pole. Positively regulates the activity of the minus-end directed microtubule motor protein dynein. May enhance dynein-mediated microtubule sliding by targeting dynein to the microtubule plus end. Required for nuclear migration during vegetative growth as well as development. Required for retrograde early endosome (EE) transport from the hyphal tip. Required for localization of dynein to the mitotic spindle poles. Recruits additional proteins to the dynein complex at SPBs. This is Nuclear distribution protein PAC1 from Phaeosphaeria nodorum (strain SN15 / ATCC MYA-4574 / FGSC 10173) (Glume blotch fungus).